We begin with the raw amino-acid sequence, 279 residues long: MLQKPRGRGRPSTQADPERDWGGAGEEGPSTSRAAGGSSQGSRASLSAPTVGPRTQKQLELKVAELVQFLLIKDQKKIPIKRTDILKHVVGDYRDVYPNLLKLAAERLQYVFGYKLVELEPKSHSYILINMLEPVEADAEMRGDQGTPISGLLMIVLGLIFMKGNTITETEVWDFLRRLGVYPTKKHLIFGDPKKLITEDFVRQRYLEYRRIPHTDPVDYELQWGPRTNLETSKMKVLKFVAKVHNQDPKDWPTQYCEALADEESRARPATASAPATSS.

The disordered stretch occupies residues 1-52 (MLQKPRGRGRPSTQADPERDWGGAGEEGPSTSRAAGGSSQGSRASLSAPTVG). Residues 30 to 48 (STSRAAGGSSQGSRASLSA) show a composition bias toward low complexity. The residue at position 38 (Ser38) is a Phosphoserine. An interaction with NSMCE1 region spans residues 52–279 (GPRTQKQLEL…ATASAPATSS (228 aa)). In terms of domain architecture, MAGE spans 59 to 259 (LELKVAELVQ…KDWPTQYCEA (201 aa)).

As to quaternary structure, component of the SMC5-SMC6 complex which consists at least of SMC5, SMC6, NSMCE2, NSMCE1, NSMCE4A or EID3 and NSMCE3. NSMCE1, NSMCE4A or EID3 and NSMCE3 probably form a subcomplex that bridges the head domains of the SMC5:SMC6 heterodimer. Interacts with PJA1. Interacts with E2F1 (via C-terminus). Interacts with NGFR (via C-terminus). Interacts with NSMCE1. Interacts with NSMCE4. Interacts with SMC6. Interacts with EID3. In terms of tissue distribution, ubiquitous.

The protein resides in the cytoplasm. It localises to the nucleus. Its subcellular location is the chromosome. It is found in the telomere. Functionally, component of the SMC5-SMC6 complex, a complex involved in repair of DNA double-strand breaks by homologous recombination. The complex may promote sister chromatid homologous recombination by recruiting the SMC1-SMC3 cohesin complex to double-strand breaks. The complex is required for telomere maintenance via recombination in ALT (alternative lengthening of telomeres) cell lines and mediates sumoylation of shelterin complex (telosome) components which is proposed to lead to shelterin complex disassembly in ALT-associated PML bodies (APBs). In vitro enhances ubiquitin ligase activity of NSMCE1. Proposed to act through recruitment and/or stabilization of the Ubl-conjugating enzyme (E2) at the E3:substrate complex. May be a growth suppressor that facilitates the entry of the cell into cell cycle arrest. In Mus musculus (Mouse), this protein is Non-structural maintenance of chromosomes element 3 homolog (Nsmce3).